A 223-amino-acid chain; its full sequence is Protein FAM3D (223 aa).

Positions 1–25 (MRVAGLIRVVVFIFTIVTMWVFLRS) are cleaved as a signal peptide. Disulfide bonds link Cys-54-Cys-82 and Cys-60-Cys-217. Residues 62-221 (NNFFAFKISS…LELEGCVPRK (160 aa)) form the GG-type lectin domain. Asn-106 carries an N-linked (GlcNAc...) asparagine glycan.

It belongs to the FAM3 family.

The protein localises to the secreted. This is Protein FAM3D from Mus musculus (Mouse).